Here is a 71-residue protein sequence, read N- to C-terminus: uncharacterized protein (71 aa).

This is an uncharacterized protein from Cassava vein mosaic virus (CsVMV).